The chain runs to 241 residues: ATP synthase subunit a (241 aa).

A run of 5 helical transmembrane segments spans residues 30–50, 91–111, 128–148, 193–213, and 214–234; these read GQVF…ISLG, FIGT…LIPW, INTT…AGLS, LVVG…VMFL, and GLFT…YYIG.

This sequence belongs to the ATPase A chain family. F-type ATPases have 2 components, CF(1) - the catalytic core - and CF(0) - the membrane proton channel. CF(1) has five subunits: alpha(3), beta(3), gamma(1), delta(1), epsilon(1). CF(0) has four main subunits: a, b, b' and c.

It localises to the cellular thylakoid membrane. Functionally, key component of the proton channel; it plays a direct role in the translocation of protons across the membrane. The protein is ATP synthase subunit a of Prochlorococcus marinus (strain MIT 9312).